The primary structure comprises 175 residues: Snake venom metalloproteinase BpMP-1 (175 aa).

One can recognise a Peptidase M12B domain in the interval 1–175 (YIELAVVADH…KHNPQCILNK (175 aa)). Ca(2+)-binding residues include Glu-3 and Asp-74. 3 disulfide bridges follow: Cys-98–Cys-171, Cys-131–Cys-155, and Cys-133–Cys-138. Position 117 (His-117) interacts with Zn(2+). The active site involves Glu-118. Residues His-121 and His-127 each coordinate Zn(2+). The Ca(2+) site is built by Cys-171 and Asn-174.

The protein belongs to the venom metalloproteinase (M12B) family. P-I subfamily. As to quaternary structure, monomer. Zn(2+) serves as cofactor. As to expression, expressed by the venom gland.

It localises to the secreted. With respect to regulation, inhibited by EDTA, 1,10-phenanthroline and beta-mercaptoethanol. Not inhibited by the serine protease inhibitors aprotinin and benzamidin. Its function is as follows. Non-hemorrhagic snake venom zinc metalloprotease that hydrolyzes the Aalpha-chain of fibrinogen, more slowly the Bbeta-chain and shows no effect on the gamma chain. Has no coagulant activity on bovine plasma and fibrinogen. In Bothrops pauloensis (Neuwied's lancehead), this protein is Snake venom metalloproteinase BpMP-1.